A 244-amino-acid chain; its full sequence is Proteasome subunit alpha 2 (244 aa).

The protein belongs to the peptidase T1A family. As to quaternary structure, the 20S proteasome core is composed of 14 alpha and 14 beta subunits that assemble into four stacked heptameric rings, resulting in a barrel-shaped structure. The two inner rings, each composed of seven catalytic beta subunits, are sandwiched by two outer rings, each composed of seven alpha subunits. The catalytic chamber with the active sites is on the inside of the barrel. Has a gated structure, the ends of the cylinder being occluded by the N-termini of the alpha-subunits. Is capped at one or both ends by the proteasome regulatory ATPase, PAN.

Its subcellular location is the cytoplasm. The formation of the proteasomal ATPase PAN-20S proteasome complex, via the docking of the C-termini of PAN into the intersubunit pockets in the alpha-rings, triggers opening of the gate for substrate entry. Interconversion between the open-gate and close-gate conformations leads to a dynamic regulation of the 20S proteasome proteolysis activity. Functionally, component of the proteasome core, a large protease complex with broad specificity involved in protein degradation. This chain is Proteasome subunit alpha 2, found in Haloarcula marismortui (strain ATCC 43049 / DSM 3752 / JCM 8966 / VKM B-1809) (Halobacterium marismortui).